A 247-amino-acid polypeptide reads, in one-letter code: Carboxy-S-adenosyl-L-methionine synthase (247 aa).

Residues tyrosine 40, 65-67 (GAS), 90-91 (DN), 122-123 (DI), asparagine 137, and arginine 204 each bind S-adenosyl-L-methionine.

Belongs to the class I-like SAM-binding methyltransferase superfamily. Cx-SAM synthase family. In terms of assembly, homodimer.

It catalyses the reaction prephenate + S-adenosyl-L-methionine = carboxy-S-adenosyl-L-methionine + 3-phenylpyruvate + H2O. In terms of biological role, catalyzes the conversion of S-adenosyl-L-methionine (SAM) to carboxy-S-adenosyl-L-methionine (Cx-SAM). This is Carboxy-S-adenosyl-L-methionine synthase from Pseudomonas entomophila (strain L48).